A 625-amino-acid polypeptide reads, in one-letter code: tRNA uridine 5-carboxymethylaminomethyl modification enzyme MnmG (625 aa).

An FAD-binding site is contributed by 11–16; the sequence is GAGHAG. 271-285 lines the NAD(+) pocket; that stretch reads GPRYCPSIETKIVTF.

This sequence belongs to the MnmG family. Homodimer. Heterotetramer of two MnmE and two MnmG subunits. FAD serves as cofactor.

The protein resides in the cytoplasm. Its function is as follows. NAD-binding protein involved in the addition of a carboxymethylaminomethyl (cmnm) group at the wobble position (U34) of certain tRNAs, forming tRNA-cmnm(5)s(2)U34. In Porphyromonas gingivalis (strain ATCC BAA-308 / W83), this protein is tRNA uridine 5-carboxymethylaminomethyl modification enzyme MnmG.